The following is a 199-amino-acid chain: Probable GTP-binding protein EngB (199 aa).

Residues 28–199 (DLPEIALAGR…DSWDAILEQV (172 aa)) enclose the EngB-type G domain. GTP contacts are provided by residues 36 to 43 (GRSNVGKS), 63 to 67 (GKTQL), 81 to 84 (DVPG), 148 to 151 (TKAD), and 180 to 182 (FSS). Ser-43 and Thr-65 together coordinate Mg(2+).

It belongs to the TRAFAC class TrmE-Era-EngA-EngB-Septin-like GTPase superfamily. EngB GTPase family. Mg(2+) serves as cofactor.

Its function is as follows. Necessary for normal cell division and for the maintenance of normal septation. This is Probable GTP-binding protein EngB from Streptococcus pyogenes serotype M28 (strain MGAS6180).